A 190-amino-acid chain; its full sequence is Ribonuclease HII (190 aa).

In terms of domain architecture, RNase H type-2 spans 1-190; sequence MAGVDEVGRG…FCRKIIENPD (190 aa). A divalent metal cation contacts are provided by Asp-5, Glu-6, and Asp-101.

The protein belongs to the RNase HII family. It depends on Mn(2+) as a cofactor. Mg(2+) is required as a cofactor.

The protein resides in the cytoplasm. The catalysed reaction is Endonucleolytic cleavage to 5'-phosphomonoester.. In terms of biological role, endonuclease that specifically degrades the RNA of RNA-DNA hybrids. This is Ribonuclease HII (rnhB) from Synechocystis sp. (strain ATCC 27184 / PCC 6803 / Kazusa).